A 1055-amino-acid chain; its full sequence is RapA guanosine triphosphatase-activating protein 1 (1055 aa).

Disordered stretches follow at residues 76–100 (LSPQ…EEER), 256–292 (NHQP…SSLT), 418–525 (QQLL…FLGV), 544–570 (THAT…SPPL), 603–629 (TTQL…PPSE), and 943–969 (NNNS…NLPT). The span at 89-100 (QHEKITPEEEER) shows a compositional bias: basic and acidic residues. Composition is skewed to low complexity over residues 262 to 292 (STPR…SSLT), 442 to 455 (DFNL…NNNN), and 469 to 482 (TTTT…NNNN). The span at 483–494 (ISPQHSGTSGSP) shows a compositional bias: polar residues. 2 stretches are compositionally biased toward low complexity: residues 603–622 (TTQL…TSQP) and 943–966 (NNNS…SDSN). One can recognise a Rap-GAP domain in the interval 779–1048 (LIQFEAKNIH…RTRKEFLHSF (270 aa)).

It is found in the cytoplasm. The protein resides in the cell cortex. Functionally, mediates the deactivation of rap1 and plays an important role in spatially and temporally regulating cell adhesion and chemotaxis by controlling attachment disassembly in the leading edge through the regulation of myosin II assembly and disassembly. Overexpression leads to defective chemotaxis. The sequence is that of RapA guanosine triphosphatase-activating protein 1 (rapgap1) from Dictyostelium discoideum (Social amoeba).